The sequence spans 331 residues: MSILPGFLLSFAIAIVSYLLNRFIFHSLGSATIAILLGIILGNLYFKQVTLFAGTAWSEKKLLEFSVMFLGATVTFQTIGKLGFSGVGFILIQMISTIIFVLFMGKKLGFSANVSALMASGNAVCGSSAIAAVEPVIGAETSEKRTSIAMVNLMGTILMLSLPFLGTWMFGNNDLLRGALIGGTEQSVGQVVASATMVNPNTTTLATLFKIMRIIMLVFVVLYFGFRSKKQKRNEQGPTQIKIKRNSFLPWYVLGFLVLCTLDTLIHFVPEVSATAKFLSGWCETIALAAIGLRLNLVEFIKAGKKLLIYGLSTLVFQVVLALILISLLIK.

The next 8 helical transmembrane spans lie at 2–20 (SILPGFLLSFAIAIVSYLL), 24–46 (IFHSLGSATIAILLGIILGNLYF), 82–104 (LGFSGVGFILIQMISTIIFVLFM), 114–136 (VSALMASGNAVCGSSAIAAVEPV), 148–170 (IAMVNLMGTILMLSLPFLGTWMF), 204–226 (TLATLFKIMRIIMLVFVVLYFGF), 247–269 (SFLPWYVLGFLVLCTLDTLIHFV), and 308–330 (LIYGLSTLVFQVVLALILISLLI).

This sequence belongs to the UPF0324 family.

The protein localises to the cell membrane. The sequence is that of UPF0324 membrane protein YdhF (ydhF) from Lactococcus lactis subsp. lactis (strain IL1403) (Streptococcus lactis).